A 124-amino-acid polypeptide reads, in one-letter code: uncharacterized protein (124 aa).

As to quaternary structure, interacts with dil1.

This is an uncharacterized protein from Schizosaccharomyces pombe (strain 972 / ATCC 24843) (Fission yeast).